Consider the following 336-residue polypeptide: Dihydroorotate dehydrogenase (quinone) (336 aa).

FMN contacts are provided by residues 62–66 and T86; that span reads AGLDK. A substrate-binding site is contributed by K66. 111 to 115 provides a ligand contact to substrate; that stretch reads NRMGF. Residues N139 and N172 each coordinate FMN. A substrate-binding site is contributed by N172. The Nucleophile role is filled by S175. A substrate-binding site is contributed by N177. Residues K217 and T245 each contribute to the FMN site. Substrate is bound at residue 246-247; sequence NT. Residues G268, G297, and 318-319 contribute to the FMN site; that span reads YS.

Belongs to the dihydroorotate dehydrogenase family. Type 2 subfamily. Monomer. FMN serves as cofactor.

The protein localises to the cell membrane. The enzyme catalyses (S)-dihydroorotate + a quinone = orotate + a quinol. Its pathway is pyrimidine metabolism; UMP biosynthesis via de novo pathway; orotate from (S)-dihydroorotate (quinone route): step 1/1. Functionally, catalyzes the conversion of dihydroorotate to orotate with quinone as electron acceptor. In Proteus mirabilis (strain HI4320), this protein is Dihydroorotate dehydrogenase (quinone).